The chain runs to 493 residues: Transcription termination factor MTERF5, chloroplastic (493 aa).

A chloroplast-targeting transit peptide spans 1-43 (MQSLSQLGPSEIFLVARREKPSTRAQLWFTGRLSFRQETNGIR).

Belongs to the mTERF family. Interacts with pTAC6. Expressed in roots, rosette leaves, cauline leaves, stems, flower buds and open flowers.

Its subcellular location is the plastid. It localises to the chloroplast. In terms of biological role, transcription termination factor required for processing and steady-state levels of plastid transcripts. Involved also in chloroplast transcriptional pausing, a general feature of chloroplast genes. Specifically and positively regulates the transcription of chloroplast psbEFLJ encoding for photosystem II (PSII) core subunits psbE, psbF, psbL and psbJ; causes the plastid-encoded RNA polymerase (PEP) complex to pause at psbEFLJ by binding to the +30 to +51 region of double-stranded DNA, and recruits additional pTAC6 to the transcriptionally paused region of psbEFLJ. May play a role in response to abiotic stresses. The polypeptide is Transcription termination factor MTERF5, chloroplastic (Arabidopsis thaliana (Mouse-ear cress)).